A 250-amino-acid polypeptide reads, in one-letter code: Lectin 1 (250 aa).

Residue asparagine 119 is glycosylated (N-linked (GlcNAc...) asparagine; partial). Positions 128 and 130 each coordinate Mn(2+). Aspartate 130, tyrosine 132, asparagine 138, and aspartate 141 together coordinate Ca(2+). Residues aspartate 141 and histidine 146 each coordinate Mn(2+).

Belongs to the leguminous lectin family.

Functionally, di-N-acetylchitobiose specific lectin. The sequence is that of Lectin 1 from Laburnum alpinum (Scotch laburnum).